Reading from the N-terminus, the 702-residue chain is Putative endo-beta-N-acetylglucosaminidase (702 aa).

Residues M1–A23 form the signal peptide. Cell wall-binding repeat units lie at residues A42–Y63, E65–M84, K86–M105, I124–H145, E147–L166, Q185–Y206, D208–M227, A229–I248, E250–M271, A273–M292, E294–M315, A317–I336, E338–M359, A361–M380, and E382–M403.

The protein belongs to the glycosyl hydrolase 73 family.

The protein localises to the secreted. The enzyme catalyses an N(4)-(oligosaccharide-(1-&gt;3)-[oligosaccharide-(1-&gt;6)]-beta-D-Man-(1-&gt;4)-beta-D-GlcNAc-(1-&gt;4)-alpha-D-GlcNAc)-L-asparaginyl-[protein] + H2O = an oligosaccharide-(1-&gt;3)-[oligosaccharide-(1-&gt;6)]-beta-D-Man-(1-&gt;4)-D-GlcNAc + N(4)-(N-acetyl-beta-D-glucosaminyl)-L-asparaginyl-[protein]. In terms of biological role, plays an important role in cell wall degradation and cell separation. The polypeptide is Putative endo-beta-N-acetylglucosaminidase (lytB) (Streptococcus pneumoniae (strain ATCC BAA-255 / R6)).